Here is a 70-residue protein sequence, read N- to C-terminus: Protein tam14 (70 aa).

Polar residues predominate over residues 1–19 (MPTVQTPSQRRANTQFQKN). The interval 1–20 (MPTVQTPSQRRANTQFQKNI) is disordered. The helical transmembrane segment at 45–65 (IAMFFILLMSGGIILGILRFL) threads the bilayer.

It belongs to the RAMP4 family.

It is found in the membrane. It localises to the endoplasmic reticulum membrane. Interacts with target proteins during their translocation into the lumen of the endoplasmic reticulum. Protects unfolded target proteins against degradation during ER stress. May facilitate glycosylation of target proteins after termination of ER stress. This is Protein tam14 (tam14) from Schizosaccharomyces pombe (strain 972 / ATCC 24843) (Fission yeast).